The following is a 452-amino-acid chain: Matrilin-3 (452 aa).

The N-terminal stretch at 1–24 (MRRALGTLGCCLALLLPLLPAARG) is a signal peptide. Positions 54-229 (DLVFIIDSSR…GVIEKLTSKF (176 aa)) constitute a VWFA domain. EGF-like domains lie at 235-275 (AANT…RTCS), 276-316 (AVDV…KTCS), 317-357 (AMDV…KTCS), and 358-398 (AVDV…KTCS). Disulfide bonds link Cys-239–Cys-250, Cys-246–Cys-259, Cys-261–Cys-274, Cys-280–Cys-291, Cys-287–Cys-300, Cys-302–Cys-315, Cys-321–Cys-332, Cys-328–Cys-341, Cys-343–Cys-356, Cys-362–Cys-373, Cys-369–Cys-382, and Cys-384–Cys-397. A glycan (N-linked (GlcNAc...) asparagine) is linked at Asn-295. Residues 419-451 (ALQDSVTSRLEALSTKLDEVSQKLQAYQDRQQV) are a coiled coil.

As to quaternary structure, can form homooligomers (monomers, dimers, trimers and tetramers) and heterooligomers with matrilin-1. As to expression, expression is restricted to cartilaginous tissues.

The protein localises to the secreted. Its function is as follows. Major component of the extracellular matrix of cartilage and may play a role in the formation of extracellular filamentous networks. This chain is Matrilin-3 (MATN3), found in Gallus gallus (Chicken).